The primary structure comprises 775 residues: Hepatocyte growth factor-regulated tyrosine kinase substrate (775 aa).

Residues 15–143 (ATSQLLLETD…IMKVEGHVFP (129 aa)) enclose the VHS domain. The segment at 160–220 (WVDAEECHRC…VCEPCYEQLN (61 aa)) adopts an FYVE-type zinc-finger fold. Residues Cys166, Cys169, Cys182, Cys185, Cys190, and Cys193 each contribute to the Zn(2+) site. The residue at position 207 (Lys207) is an N6-acetyllysine. Cys212 and Cys215 together coordinate Zn(2+). Tyr216 is subject to Phosphotyrosine. The disordered stretch occupies residues 223 to 319 (AEGKASSTTE…SPVNSSAPLA (97 aa)). The interval 225–541 (GKASSTTELP…QRLQEQEKER (317 aa)) is interaction with SNX1. In terms of domain architecture, UIM spans 258–277 (QEEEELQLALALSQSEAEEK). The span at 307–316 (LYSSPVNSSA) shows a compositional bias: polar residues. Residues Tyr308, Tyr329, and Tyr334 each carry the phosphotyrosine modification. A disordered region spans residues 338–405 (KQEEARKSPT…NGESEESHEQ (68 aa)). The segment at 443-541 (SINTMHPQLL…QRLQEQEKER (99 aa)) is interaction with SNAP25 and TRAK2. Residues 452–570 (LELLNQLDER…FPLPYAQLQA (119 aa)) are interaction with STAM. The tract at residues 478 to 775 (ARGALSALRE…GSEAQLISFD (298 aa)) is interaction with NF2. Lys549 bears the N6-succinyllysine mark. Residues 640-657 (PGAQAAPQAQAGPTTSPA) are compositionally biased toward low complexity. Disordered regions lie at residues 640-690 (PGAQ…PQTS) and 719-775 (QDAS…ISFD). Over residues 658–690 (YSSYQPTPTPGYQSVASQAPQSLPAISQPPQTS) the composition is skewed to polar residues. Residues 744 to 761 (TGPPQQQPPVAQPAPTQG) are compositionally biased toward pro residues.

As to quaternary structure, component of the ESCRT-0 complex composed of STAM or STAM2 and HGS. Part of a complex at least composed of HSG, STAM2 (or probably STAM) and EPS15. Interacts with STAM. Interacts with STAM2. Interacts with EPS15; the interaction is direct, calcium-dependent and inhibited by SNAP25. Identified in a complex with STAM and LITAF. Found in a complex with STAM and E3 ligase ITCH and DTX3L. Interacts with E3 ligase DTX3L; the interaction brings together STAM and HSG, promotes their recruitment to early endosomes and decreases STAM and HGS ubiquitination by ITCH. Interacts with NF2; the interaction is direct. Interacts with ubiquitin; the interaction is direct. Interacts with VPS37C. Interacts with SMAD1, SMAD2 and SMAD3. Interacts with TSG101; the interaction mediates the association with the ESCRT-I complex. Interacts with SNAP25; the interaction is direct and decreases with addition of increasing concentrations of free calcium. Interacts with SNX1; the interaction is direct. Component of a 550 kDa membrane complex at least composed of HGS and SNX1 but excluding EGFR. Interacts with TRAK1. Interacts with TRAK2. Component of the CART complex, at least composed of ACTN4, HGS/HRS, MYO5B and TRIM3. Interacts with ARRDC3. Identified in a complex containing at least ARRDC4, AVPR2 and HGS. Interacts (via UIM domain) with UBQLN1 (via ubiquitin-like domain). Interacts with LAPTM4B; promotes HGS ubiquitination. Phosphorylated on Tyr-334. This phosphorylation occurs in response to EGF. A minor site of phosphorylation on Tyr-329 is detected. Protein phosphorylation may also be triggered in response to IL-2, GM-CSF and HGF. Post-translationally, ubiquitinated by ITCH. In terms of tissue distribution, ubiquitous expression in adult and fetal tissues with higher expression in testis.

It is found in the cytoplasm. The protein resides in the early endosome membrane. Its subcellular location is the endosome. The protein localises to the multivesicular body membrane. Involved in intracellular signal transduction mediated by cytokines and growth factors. When associated with STAM, it suppresses DNA signaling upon stimulation by IL-2 and GM-CSF. Could be a direct effector of PI3-kinase in vesicular pathway via early endosomes and may regulate trafficking to early and late endosomes by recruiting clathrin. May concentrate ubiquitinated receptors within clathrin-coated regions. Involved in down-regulation of receptor tyrosine kinase via multivesicular body (MVBs) when complexed with STAM (ESCRT-0 complex). The ESCRT-0 complex binds ubiquitin and acts as a sorting machinery that recognizes ubiquitinated receptors and transfers them to further sequential lysosomal sorting/trafficking processes. May contribute to the efficient recruitment of SMADs to the activin receptor complex. Involved in receptor recycling via its association with the CART complex, a multiprotein complex required for efficient transferrin receptor recycling but not for EGFR degradation. The chain is Hepatocyte growth factor-regulated tyrosine kinase substrate (Hgs) from Mus musculus (Mouse).